We begin with the raw amino-acid sequence, 148 residues long: Large-conductance mechanosensitive channel (148 aa).

The next 2 helical transmembrane spans lie at 9 to 29 (AFAVKGNVVDMAVGIIIGAAF) and 79 to 99 (IQTVIDFIIVAFAIFMGVKAI).

Belongs to the MscL family. In terms of assembly, homopentamer.

It localises to the cell inner membrane. Its function is as follows. Channel that opens in response to stretch forces in the membrane lipid bilayer. May participate in the regulation of osmotic pressure changes within the cell. The sequence is that of Large-conductance mechanosensitive channel from Pseudomonas syringae pv. tomato (strain ATCC BAA-871 / DC3000).